The sequence spans 944 residues: Isoleucine--tRNA ligase (944 aa).

Residues 58-68 (PYANGSIHIGH) carry the 'HIGH' region motif. E563 is a binding site for L-isoleucyl-5'-AMP. The 'KMSKS' region motif lies at 604-608 (KMSKS). ATP is bound at residue K607. Residues C907, C910, C927, and C930 each contribute to the Zn(2+) site.

The protein belongs to the class-I aminoacyl-tRNA synthetase family. IleS type 1 subfamily. In terms of assembly, monomer. Requires Zn(2+) as cofactor.

It is found in the cytoplasm. The enzyme catalyses tRNA(Ile) + L-isoleucine + ATP = L-isoleucyl-tRNA(Ile) + AMP + diphosphate. In terms of biological role, catalyzes the attachment of isoleucine to tRNA(Ile). As IleRS can inadvertently accommodate and process structurally similar amino acids such as valine, to avoid such errors it has two additional distinct tRNA(Ile)-dependent editing activities. One activity is designated as 'pretransfer' editing and involves the hydrolysis of activated Val-AMP. The other activity is designated 'posttransfer' editing and involves deacylation of mischarged Val-tRNA(Ile). The polypeptide is Isoleucine--tRNA ligase (Salmonella choleraesuis (strain SC-B67)).